A 231-amino-acid chain; its full sequence is tRNA (guanine-N(1)-)-methyltransferase (231 aa).

S-adenosyl-L-methionine is bound by residues Gly114 and 134-139 (IGDYVL).

The protein belongs to the RNA methyltransferase TrmD family. As to quaternary structure, homodimer.

The protein localises to the cytoplasm. It carries out the reaction guanosine(37) in tRNA + S-adenosyl-L-methionine = N(1)-methylguanosine(37) in tRNA + S-adenosyl-L-homocysteine + H(+). Its function is as follows. Specifically methylates guanosine-37 in various tRNAs. This chain is tRNA (guanine-N(1)-)-methyltransferase, found in Clostridioides difficile (strain 630) (Peptoclostridium difficile).